A 1228-amino-acid chain; its full sequence is ABC transporter B family member 16 (1228 aa).

The next 6 membrane-spanning stretches (helical) occupy residues 22–42, 69–89, 145–167, 171–193, 251–271, and 283–303; these read MGLG…LFFI, LAML…GYCW, LPNI…MLLW, IVGF…ALIG, GIAI…TWYG, and GTVS…GQAL. The region spanning 22–311 is the ABC transmembrane type-1 1 domain; that stretch reads MGLGLIGAVG…ALSNLKYFSE (290 aa). One can recognise an ABC transporter 1 domain in the interval 346 to 582; it reads VEFNNVKCKY…DGKYTSLVRL (237 aa). Position 381–388 (381–388) interacts with ATP; the sequence is GGSGSGKS. Residues Asn-529, Asn-593, and Asn-628 are each glycosylated (N-linked (GlcNAc...) asparagine). The 289-residue stretch at 658–946 folds into the ABC transmembrane type-1 2 domain; sequence ALCGCLSASL…AGTMTTDLAK (289 aa). The next 2 helical transmembrane spans lie at 667 to 687 and 700 to 720; these read LGGA…SVFF and IYVL…ISQQ. Residue Asn-755 is glycosylated (N-linked (GlcNAc...) asparagine). Transmembrane regions (helical) follow at residues 781 to 801 and 805 to 825; these read LLVQ…VIAW and IVMI…RVLL. N-linked (GlcNAc...) asparagine glycosylation occurs at Asn-827. 2 helical membrane-spanning segments follow: residues 881 to 901 and 920 to 940; these read SWLA…TSAL and FFEL…AGTM. The 239-residue stretch at 981–1219 folds into the ABC transporter 2 domain; that stretch reads ITFLNVDFAY…GPTGSYFSLV (239 aa). Asn-1001 carries N-linked (GlcNAc...) asparagine glycosylation. 1016-1023 contacts ATP; sequence GPSRSGKS.

This sequence belongs to the ABC transporter superfamily. ABCB family. Multidrug resistance exporter (TC 3.A.1.201) subfamily.

Its subcellular location is the membrane. This chain is ABC transporter B family member 16 (ABCB16), found in Arabidopsis thaliana (Mouse-ear cress).